We begin with the raw amino-acid sequence, 166 residues long: Pyruvoyl-dependent arginine decarboxylase (166 aa).

The residue at position 45 (serine 45) is a Pyruvic acid (Ser).

This sequence belongs to the PdaD family. Pyruvate serves as cofactor.

It carries out the reaction L-arginine + H(+) = agmatine + CO2. The polypeptide is Pyruvoyl-dependent arginine decarboxylase (Methanocella arvoryzae (strain DSM 22066 / NBRC 105507 / MRE50)).